Here is a 649-residue protein sequence, read N- to C-terminus: Serine/threonine-protein kinase par-4 (649 aa).

Over residues 1-11 (MEGPSSSSVPT) the composition is skewed to polar residues. Residues 1 to 132 (MEGPSSSSVP…DEEAETPEEQ (132 aa)) are disordered. Residues 45–55 (NTEKMEKEKKP) are compositionally biased toward basic and acidic residues. Acidic residues-rich tracts occupy residues 64-77 (PDYD…GSCE) and 117-129 (DDME…AETP). The Protein kinase domain occupies 197-460 (YLWGGIIGTG…ISDVMQHPWF (264 aa)). ATP contacts are provided by residues 203-211 (IGTGSYGKV) and lysine 226. Aspartate 324 (proton acceptor) is an active-site residue. The segment at 548–649 (TLEKRPGDGP…CIFRSRTDSS (102 aa)) is disordered. Residues 597–609 (AVEVVEAVAAPEA) are compositionally biased toward low complexity.

Belongs to the protein kinase superfamily. CAMK Ser/Thr protein kinase family. LKB1 subfamily. Requires Mg(2+) as cofactor. Mn(2+) is required as a cofactor.

The protein resides in the cytoplasm. Its subcellular location is the cell cortex. It catalyses the reaction L-seryl-[protein] + ATP = O-phospho-L-seryl-[protein] + ADP + H(+). It carries out the reaction L-threonyl-[protein] + ATP = O-phospho-L-threonyl-[protein] + ADP + H(+). Functionally, required for cytoplasmic partitioning and asymmetric cell division in early embryogenesis. Phosphorylates and restricts the asymmetry effectors mex-5 and mex-6 to the anterior cytoplasm of the zygote and maintains these phosphorylations until fertilization. Phosphorylates and regulates aak-2 in response to oxidative stress. May also play a role in motility, behavioral response, regulation of lifespan and dauer formation through this pathway. The polypeptide is Serine/threonine-protein kinase par-4 (Caenorhabditis briggsae).